Here is a 289-residue protein sequence, read N- to C-terminus: S-methyl-5'-thioadenosine phosphorylase (289 aa).

Residues serine 24, arginine 66 to histidine 67, and threonine 99 to alanine 100 contribute to the phosphate site. Methionine 202 is a binding site for substrate. Residue threonine 203 participates in phosphate binding. Aspartate 226–aspartate 228 lines the substrate pocket.

The protein belongs to the PNP/MTAP phosphorylase family. MTAP subfamily. In terms of assembly, homotrimer.

The protein localises to the cytoplasm. Its subcellular location is the nucleus. The catalysed reaction is S-methyl-5'-thioadenosine + phosphate = 5-(methylsulfanyl)-alpha-D-ribose 1-phosphate + adenine. It participates in amino-acid biosynthesis; L-methionine biosynthesis via salvage pathway; S-methyl-5-thio-alpha-D-ribose 1-phosphate from S-methyl-5'-thioadenosine (phosphorylase route): step 1/1. In terms of biological role, catalyzes the reversible phosphorylation of S-methyl-5'-thioadenosine (MTA) to adenine and 5-methylthioribose-1-phosphate. Involved in the breakdown of MTA, a major by-product of polyamine biosynthesis. Responsible for the first step in the methionine salvage pathway after MTA has been generated from S-adenosylmethionine. Has broad substrate specificity with 6-aminopurine nucleosides as preferred substrates. In Drosophila pseudoobscura pseudoobscura (Fruit fly), this protein is S-methyl-5'-thioadenosine phosphorylase.